A 390-amino-acid polypeptide reads, in one-letter code: Lipid-A-disaccharide synthase (390 aa).

The protein belongs to the LpxB family.

The enzyme catalyses a lipid X + a UDP-2-N,3-O-bis[(3R)-3-hydroxyacyl]-alpha-D-glucosamine = a lipid A disaccharide + UDP + H(+). It functions in the pathway bacterial outer membrane biogenesis; LPS lipid A biosynthesis. Condensation of UDP-2,3-diacylglucosamine and 2,3-diacylglucosamine-1-phosphate to form lipid A disaccharide, a precursor of lipid A, a phosphorylated glycolipid that anchors the lipopolysaccharide to the outer membrane of the cell. In Haemophilus influenzae (strain PittGG), this protein is Lipid-A-disaccharide synthase.